A 315-amino-acid polypeptide reads, in one-letter code: ATP synthase gamma chain (315 aa).

The protein belongs to the ATPase gamma chain family. As to quaternary structure, F-type ATPases have 2 components, CF(1) - the catalytic core - and CF(0) - the membrane proton channel. CF(1) has five subunits: alpha(3), beta(3), gamma(1), delta(1), epsilon(1). CF(0) has three main subunits: a, b and c.

The protein localises to the cellular thylakoid membrane. Its function is as follows. Produces ATP from ADP in the presence of a proton gradient across the membrane. The gamma chain is believed to be important in regulating ATPase activity and the flow of protons through the CF(0) complex. This Nostoc punctiforme (strain ATCC 29133 / PCC 73102) protein is ATP synthase gamma chain.